The following is a 229-amino-acid chain: 7-cyano-7-deazaguanine synthase (229 aa).

14-24 is a binding site for ATP; sequence LSGGQDSTTCL. The Zn(2+) site is built by Cys192, Cys200, Cys203, and Cys206.

It belongs to the QueC family. Zn(2+) serves as cofactor.

The catalysed reaction is 7-carboxy-7-deazaguanine + NH4(+) + ATP = 7-cyano-7-deazaguanine + ADP + phosphate + H2O + H(+). It functions in the pathway purine metabolism; 7-cyano-7-deazaguanine biosynthesis. In terms of biological role, catalyzes the ATP-dependent conversion of 7-carboxy-7-deazaguanine (CDG) to 7-cyano-7-deazaguanine (preQ(0)). The protein is 7-cyano-7-deazaguanine synthase of Laribacter hongkongensis (strain HLHK9).